A 97-amino-acid chain; its full sequence is Large ribosomal subunit protein bL28 (97 aa).

It belongs to the bacterial ribosomal protein bL28 family.

This is Large ribosomal subunit protein bL28 from Rickettsia prowazekii (strain Madrid E).